A 225-amino-acid polypeptide reads, in one-letter code: Immune-associated nucleotide-binding protein 1 (225 aa).

Residues 6–214 (CPVTNLLLLG…YTENMHRKIK (209 aa)) form the AIG1-type G domain. Positions 15–22 (GRSENGKS) are G1. GTP is bound at residue 15–23 (GRSENGKSS). The segment at 42 to 46 (DMDQR) is G2. Residues 64–67 (DTPG) are G3. The interval 134–137 (TGGD) is G4. Residues 173-175 (NNK) are G5. Residue N174 participates in GTP binding.

The protein belongs to the TRAFAC class TrmE-Era-EngA-EngB-Septin-like GTPase superfamily. AIG1/Toc34/Toc159-like paraseptin GTPase family. IAN subfamily. In terms of tissue distribution, mostly expressed in pollen.

This Arabidopsis thaliana (Mouse-ear cress) protein is Immune-associated nucleotide-binding protein 1.